The sequence spans 293 residues: 4-hydroxy-tetrahydrodipicolinate synthase (293 aa).

Threonine 45 is a binding site for pyruvate. Tyrosine 133 functions as the Proton donor/acceptor in the catalytic mechanism. Residue lysine 161 is the Schiff-base intermediate with substrate of the active site. Isoleucine 204 contributes to the pyruvate binding site.

It belongs to the DapA family. In terms of assembly, homotetramer; dimer of dimers.

The protein resides in the cytoplasm. It catalyses the reaction L-aspartate 4-semialdehyde + pyruvate = (2S,4S)-4-hydroxy-2,3,4,5-tetrahydrodipicolinate + H2O + H(+). Its pathway is amino-acid biosynthesis; L-lysine biosynthesis via DAP pathway; (S)-tetrahydrodipicolinate from L-aspartate: step 3/4. In terms of biological role, catalyzes the condensation of (S)-aspartate-beta-semialdehyde [(S)-ASA] and pyruvate to 4-hydroxy-tetrahydrodipicolinate (HTPA). The sequence is that of 4-hydroxy-tetrahydrodipicolinate synthase from Edwardsiella ictaluri (strain 93-146).